We begin with the raw amino-acid sequence, 234 residues long: Endo-1,4-beta-xylanase 1 (234 aa).

The N-terminal stretch at M1 to A21 is a signal peptide. N-linked (GlcNAc...) asparagine glycans are attached at residues N25 and N75. Positions S38–A234 constitute a GH11 domain. E124 functions as the Nucleophile in the catalytic mechanism. N-linked (GlcNAc...) asparagine glycosylation is present at N167. The active-site Proton donor is E221.

It belongs to the glycosyl hydrolase 11 (cellulase G) family.

It localises to the secreted. It carries out the reaction Endohydrolysis of (1-&gt;4)-beta-D-xylosidic linkages in xylans.. The protein operates within glycan degradation; xylan degradation. Its function is as follows. Endo-1,4-beta-xylanase involved in the hydrolysis of xylan, a major structural heterogeneous polysaccharide found in plant biomass representing the second most abundant polysaccharide in the biosphere, after cellulose. The sequence is that of Endo-1,4-beta-xylanase 1 (Xyn1) from Leucoagaricus gongylophorus (Leaf-cutting ant fungus).